The primary structure comprises 365 residues: Chorismate synthase (365 aa).

NADP(+) is bound at residue arginine 46. Residues 124-126, glycine 284, 299-303, and arginine 326 contribute to the FMN site; these read RAS and KPTPS.

Belongs to the chorismate synthase family. It depends on FMNH2 as a cofactor.

The enzyme catalyses 5-O-(1-carboxyvinyl)-3-phosphoshikimate = chorismate + phosphate. The protein operates within metabolic intermediate biosynthesis; chorismate biosynthesis; chorismate from D-erythrose 4-phosphate and phosphoenolpyruvate: step 7/7. In terms of biological role, catalyzes the anti-1,4-elimination of the C-3 phosphate and the C-6 proR hydrogen from 5-enolpyruvylshikimate-3-phosphate (EPSP) to yield chorismate, which is the branch point compound that serves as the starting substrate for the three terminal pathways of aromatic amino acid biosynthesis. This reaction introduces a second double bond into the aromatic ring system. In Pyrobaculum neutrophilum (strain DSM 2338 / JCM 9278 / NBRC 100436 / V24Sta) (Thermoproteus neutrophilus), this protein is Chorismate synthase.